A 464-amino-acid polypeptide reads, in one-letter code: Soluble pyridine nucleotide transhydrogenase (464 aa).

Residue 35-44 (EDKSQVGGNC) participates in FAD binding.

The protein belongs to the class-I pyridine nucleotide-disulfide oxidoreductase family. FAD is required as a cofactor.

It is found in the cytoplasm. The catalysed reaction is NAD(+) + NADPH = NADH + NADP(+). Its function is as follows. Conversion of NADPH, generated by peripheral catabolic pathways, to NADH, which can enter the respiratory chain for energy generation. In Hahella chejuensis (strain KCTC 2396), this protein is Soluble pyridine nucleotide transhydrogenase.